Reading from the N-terminus, the 146-residue chain is Small ribosomal subunit protein uS9 (146 aa).

Belongs to the universal ribosomal protein uS9 family. As to quaternary structure, component of the small ribosomal subunit.

Its subcellular location is the cytoplasm. Functionally, component of the small ribosomal subunit. The ribosome is a large ribonucleoprotein complex responsible for the synthesis of proteins in the cell. The chain is Small ribosomal subunit protein uS9 (rps16) from Ictalurus punctatus (Channel catfish).